The sequence spans 366 residues: Nitronate monooxygenase (366 aa).

FMN is bound by residues N74, Q181, G186, G223, and 242–245 (QLGT).

The protein belongs to the nitronate monooxygenase family. NMO class I subfamily. The cofactor is FMN.

The enzyme catalyses 3 propionate 3-nitronate + 3 O2 + H2O = 3 3-oxopropanoate + 2 nitrate + nitrite + H2O2 + 3 H(+). In terms of biological role, nitronate monooxygenase that uses molecular oxygen to catalyze the oxidative denitrification of alkyl nitronates. Acts on propionate 3-nitronate (P3N), the presumed physiological substrate. Is likely involved in the degradation of P3N, that allows B.phytofirmans PsJN to grow on 3-nitropropionate/P3N as the sole source of nitrogen and carbon. Also probably functions in the detoxification of P3N, a metabolic poison produced by plants and fungi as a defense mechanism. Cannot oxidize nitroalkanes such as 3-nitropropionate, nitroethane, or 1-nitropropane. The sequence is that of Nitronate monooxygenase from Paraburkholderia phytofirmans (strain DSM 17436 / LMG 22146 / PsJN) (Burkholderia phytofirmans).